We begin with the raw amino-acid sequence, 644 residues long: Exoribonuclease 2 (644 aa).

In terms of domain architecture, RNB spans 189–516 (REDLTALNFV…NHRLLKAMIT (328 aa)). One can recognise an S1 motif domain in the interval 561–643 (DTRFTAEIID…ETRNVIARPV (83 aa)).

It belongs to the RNR ribonuclease family. RNase II subfamily.

The protein localises to the cytoplasm. The catalysed reaction is Exonucleolytic cleavage in the 3'- to 5'-direction to yield nucleoside 5'-phosphates.. Involved in mRNA degradation. Hydrolyzes single-stranded polyribonucleotides processively in the 3' to 5' direction. The protein is Exoribonuclease 2 of Yersinia pestis bv. Antiqua (strain Antiqua).